A 127-amino-acid polypeptide reads, in one-letter code: Phosphoribosyl-AMP cyclohydrolase (127 aa).

Residue Asp78 participates in Mg(2+) binding. Residue Cys79 participates in Zn(2+) binding. Asp80 and Asp82 together coordinate Mg(2+). Zn(2+) is bound by residues Cys95 and Cys102.

The protein belongs to the PRA-CH family. Homodimer. Mg(2+) is required as a cofactor. It depends on Zn(2+) as a cofactor.

It is found in the cytoplasm. The catalysed reaction is 1-(5-phospho-beta-D-ribosyl)-5'-AMP + H2O = 1-(5-phospho-beta-D-ribosyl)-5-[(5-phospho-beta-D-ribosylamino)methylideneamino]imidazole-4-carboxamide. The protein operates within amino-acid biosynthesis; L-histidine biosynthesis; L-histidine from 5-phospho-alpha-D-ribose 1-diphosphate: step 3/9. Catalyzes the hydrolysis of the adenine ring of phosphoribosyl-AMP. This Salinibacter ruber (strain DSM 13855 / M31) protein is Phosphoribosyl-AMP cyclohydrolase.